The following is a 657-amino-acid chain: Acetyl-coenzyme A synthetase (657 aa).

CoA contacts are provided by residues 192–195 (RRGK) and Thr311. ATP is bound by residues 387–389 (GEP), 411–416 (DTWWQT), Asp504, Arg519, and Arg530. The Mg(2+) site is built by His543 and Val546. Arg592 serves as a coordination point for CoA. Lys617 is modified (N6-acetyllysine).

This sequence belongs to the ATP-dependent AMP-binding enzyme family. Mg(2+) is required as a cofactor. In terms of processing, acetylated. Deacetylation by the SIR2-homolog deacetylase activates the enzyme.

The enzyme catalyses acetate + ATP + CoA = acetyl-CoA + AMP + diphosphate. Its function is as follows. Catalyzes the conversion of acetate into acetyl-CoA (AcCoA), an essential intermediate at the junction of anabolic and catabolic pathways. AcsA undergoes a two-step reaction. In the first half reaction, AcsA combines acetate with ATP to form acetyl-adenylate (AcAMP) intermediate. In the second half reaction, it can then transfer the acetyl group from AcAMP to the sulfhydryl group of CoA, forming the product AcCoA. This is Acetyl-coenzyme A synthetase from Campylobacter jejuni subsp. jejuni serotype O:2 (strain ATCC 700819 / NCTC 11168).